The sequence spans 496 residues: Pre-glycoprotein polyprotein GP complex (496 aa).

The N-myristoyl glycine; by host moiety is linked to residue Gly2. Over 2–17 the chain is Extracellular; sequence GQLISFFQEIPVFLQE. The chain crosses the membrane as a helical span at residues 18–32; the sequence is ALNIALVAVSLIAVI. Lys33 is a topological domain (cytoplasmic). The helical transmembrane segment at 34 to 53 threads the bilayer; the sequence is GIINLYKSGLFQFIFFLLLA. Extracellular segments lie at residues 54-58 and 59-435; these read GRSCS and DGTF…TLVD. Zn(2+) is bound at residue Cys57. N-linked (GlcNAc...) asparagine; by host glycans are attached at residues Asn83, Asn95, Asn137, Asn166, and Asn178. Disulfide bonds link Cys92–Cys237, Cys135–Cys164, Cys207–Cys213, Cys282–Cys295, Cys304–Cys313, and Cys367–Cys388. Residues Asn368, Asn376, Asn393, and Asn398 are each glycosylated (N-linked (GlcNAc...) asparagine; by host). Residues 436–456 traverse the membrane as a helical segment; it reads ICFWSTVFFTASLFLHLVGIP. The Cytoplasmic segment spans residues 457 to 496; it reads THRHLKGEACPLPHKLDSFGGCRCGKYPRLRKPTIWHKRH. The Zn(2+) site is built by His458, His460, Cys466, His470, Cys478, Cys480, and His496.

The protein belongs to the arenaviridae GPC protein family. Homotetramer; disulfide-linked. Interacts with host TFRC. In terms of assembly, homotetramer. GP2 homotetramers bind through ionic interactions with GP1 homotetramers to form the GP complex together with the stable signal peptide. The GP-C polyprotein interacts with the host protease MBTPS1/SKI-1 resulting in the polyprotein processing. In terms of processing, specific enzymatic cleavages in vivo yield mature proteins. GP-C polyprotein is cleaved in the endoplasmic reticulum by the host protease MBTPS1. Only cleaved glycoprotein is incorporated into virions. Post-translationally, the SSP remains stably associated with the GP complex following cleavage by signal peptidase and plays crucial roles in the trafficking of GP through the secretory pathway. Myristoylation is necessary for GP2-mediated fusion activity.

It localises to the virion membrane. It is found in the host endoplasmic reticulum membrane. The protein resides in the host Golgi apparatus membrane. The protein localises to the host cell membrane. Its function is as follows. Class I viral fusion protein that directs fusion of viral and host endosomal membranes, leading to delivery of the nucleocapsid into the cytoplasm. Membrane fusion is mediated by irreversible conformational changes induced upon acidification in the endosome. Stable signal peptide (SSP): cleaved and functions as a signal peptide. In addition, it is also retained as the third component of the GP complex. The SSP is required for efficient glycoprotein expression, post-translational maturation cleavage of GP1 and GP2, glycoprotein transport to the cell surface plasma membrane, formation of infectious virus particles, and acid pH-dependent glycoprotein-mediated cell fusion. Functionally, interacts with the host receptor. Mediates virus attachment to host TFRC. This attachment induces virion internalization predominantly through clathrin-mediated endocytosis. The sequence is that of Pre-glycoprotein polyprotein GP complex from Machupo virus (MACV).